A 328-amino-acid polypeptide reads, in one-letter code: Tetraacyldisaccharide 4'-kinase (328 aa).

Position 58–65 (58–65 (TMGGAGKT)) interacts with ATP.

The protein belongs to the LpxK family.

It catalyses the reaction a lipid A disaccharide + ATP = a lipid IVA + ADP + H(+). Its pathway is glycolipid biosynthesis; lipid IV(A) biosynthesis; lipid IV(A) from (3R)-3-hydroxytetradecanoyl-[acyl-carrier-protein] and UDP-N-acetyl-alpha-D-glucosamine: step 6/6. Its function is as follows. Transfers the gamma-phosphate of ATP to the 4'-position of a tetraacyldisaccharide 1-phosphate intermediate (termed DS-1-P) to form tetraacyldisaccharide 1,4'-bis-phosphate (lipid IVA). This is Tetraacyldisaccharide 4'-kinase from Phenylobacterium zucineum (strain HLK1).